Here is a 424-residue protein sequence, read N- to C-terminus: Serine--tRNA ligase (424 aa).

230 to 232 (TAE) lines the L-serine pocket. Residue 261–263 (RSE) participates in ATP binding. E284 provides a ligand contact to L-serine. 348–351 (EISS) lines the ATP pocket. S382 contributes to the L-serine binding site.

It belongs to the class-II aminoacyl-tRNA synthetase family. Type-1 seryl-tRNA synthetase subfamily. Homodimer. The tRNA molecule binds across the dimer.

Its subcellular location is the cytoplasm. It carries out the reaction tRNA(Ser) + L-serine + ATP = L-seryl-tRNA(Ser) + AMP + diphosphate + H(+). The enzyme catalyses tRNA(Sec) + L-serine + ATP = L-seryl-tRNA(Sec) + AMP + diphosphate + H(+). It functions in the pathway aminoacyl-tRNA biosynthesis; selenocysteinyl-tRNA(Sec) biosynthesis; L-seryl-tRNA(Sec) from L-serine and tRNA(Sec): step 1/1. Catalyzes the attachment of serine to tRNA(Ser). Is also able to aminoacylate tRNA(Sec) with serine, to form the misacylated tRNA L-seryl-tRNA(Sec), which will be further converted into selenocysteinyl-tRNA(Sec). This Solibacter usitatus (strain Ellin6076) protein is Serine--tRNA ligase.